A 545-amino-acid chain; its full sequence is Membrane protein insertase YidC (545 aa).

4 helical membrane passes run 350-370 (IIGNWGWAIVVLTIIVKAVLY), 424-444 (LPMLLQIPVFIGLYWALFASV), 461-481 (ADPYYILPIIMAATMFAQTYL), and 498-518 (PLVFSVMFFFFPAGLVLYWVV).

It belongs to the OXA1/ALB3/YidC family. Type 1 subfamily. As to quaternary structure, interacts with the Sec translocase complex via SecD. Specifically interacts with transmembrane segments of nascent integral membrane proteins during membrane integration.

It localises to the cell inner membrane. Its function is as follows. Required for the insertion and/or proper folding and/or complex formation of integral membrane proteins into the membrane. Involved in integration of membrane proteins that insert both dependently and independently of the Sec translocase complex, as well as at least some lipoproteins. Aids folding of multispanning membrane proteins. In Neisseria gonorrhoeae (strain NCCP11945), this protein is Membrane protein insertase YidC.